The chain runs to 283 residues: MIKIGAHMPISGGFKRVPKETHEIGGNAFQIFPHNPRQWKAKLPKDDDVEIFKKRVKEYNLTEDSMLCHSGYLINIASPKEEIWQKSLELLILEMNICKTLGIRYLNIHPGSHLNSGVEKGINQIVKALNIAMEKEKETFILLENVTKKGGNIGSTLEELKMIIEMVKYPERIGITIDTCHAFDAGYDITNKEKLDKFLKMIDKLFSLEKLKFIHLNDSKNELGSNKDRHENIGKGKIGVKGLKTFLTNETIQKIPWILETPGDNEVHKNDIKEVFNILGVKQ.

Residues His-69, His-109, Glu-144, Asp-178, His-181, His-215, Asp-228, His-230, and Glu-260 each coordinate Zn(2+).

Belongs to the AP endonuclease 2 family. Zn(2+) is required as a cofactor.

It carries out the reaction Endonucleolytic cleavage to 5'-phosphooligonucleotide end-products.. In terms of biological role, endonuclease IV plays a role in DNA repair. It cleaves phosphodiester bonds at apurinic or apyrimidinic (AP) sites, generating a 3'-hydroxyl group and a 5'-terminal sugar phosphate. This Thermosipho melanesiensis (strain DSM 12029 / CIP 104789 / BI429) protein is Probable endonuclease 4.